Reading from the N-terminus, the 962-residue chain is Glycine dehydrogenase (decarboxylating) (962 aa).

At Lys709 the chain carries N6-(pyridoxal phosphate)lysine.

It belongs to the GcvP family. In terms of assembly, the glycine cleavage system is composed of four proteins: P, T, L and H. Requires pyridoxal 5'-phosphate as cofactor.

It catalyses the reaction N(6)-[(R)-lipoyl]-L-lysyl-[glycine-cleavage complex H protein] + glycine + H(+) = N(6)-[(R)-S(8)-aminomethyldihydrolipoyl]-L-lysyl-[glycine-cleavage complex H protein] + CO2. The glycine cleavage system catalyzes the degradation of glycine. The P protein binds the alpha-amino group of glycine through its pyridoxal phosphate cofactor; CO(2) is released and the remaining methylamine moiety is then transferred to the lipoamide cofactor of the H protein. In Shewanella baltica (strain OS223), this protein is Glycine dehydrogenase (decarboxylating).